The following is a 180-amino-acid chain: Large ribosomal subunit protein uL5 (180 aa).

The protein belongs to the universal ribosomal protein uL5 family. Part of the 50S ribosomal subunit; part of the 5S rRNA/L5/L18/L25 subcomplex. Contacts the 5S rRNA and the P site tRNA. Forms a bridge to the 30S subunit in the 70S ribosome.

Its function is as follows. This is one of the proteins that bind and probably mediate the attachment of the 5S RNA into the large ribosomal subunit, where it forms part of the central protuberance. In the 70S ribosome it contacts protein S13 of the 30S subunit (bridge B1b), connecting the 2 subunits; this bridge is implicated in subunit movement. Contacts the P site tRNA; the 5S rRNA and some of its associated proteins might help stabilize positioning of ribosome-bound tRNAs. In Xanthomonas axonopodis pv. citri (strain 306), this protein is Large ribosomal subunit protein uL5.